A 368-amino-acid polypeptide reads, in one-letter code: DNA replication and repair protein RecF (368 aa).

Position 30 to 37 (30 to 37 (GKNGTGKT)) interacts with ATP.

The protein belongs to the RecF family.

It localises to the cytoplasm. The RecF protein is involved in DNA metabolism; it is required for DNA replication and normal SOS inducibility. RecF binds preferentially to single-stranded, linear DNA. It also seems to bind ATP. The chain is DNA replication and repair protein RecF from Chloroherpeton thalassium (strain ATCC 35110 / GB-78).